Reading from the N-terminus, the 146-residue chain is Small ribosomal subunit protein eS19 (146 aa).

Belongs to the eukaryotic ribosomal protein eS19 family.

In Oryza sativa subsp. japonica (Rice), this protein is Small ribosomal subunit protein eS19 (RPS19A).